A 128-amino-acid chain; its full sequence is Large ribosomal subunit protein bL17 (128 aa).

It belongs to the bacterial ribosomal protein bL17 family. Part of the 50S ribosomal subunit. Contacts protein L32.

The protein is Large ribosomal subunit protein bL17 of Streptococcus gordonii (strain Challis / ATCC 35105 / BCRC 15272 / CH1 / DL1 / V288).